The sequence spans 495 residues: UDP-N-acetylmuramoyl-L-alanyl-D-glutamate--2,6-diaminopimelate ligase (495 aa).

UDP-N-acetyl-alpha-D-muramoyl-L-alanyl-D-glutamate-binding positions include Leu27, Ser29, and 44–46; that span reads HQA. Residue 116–122 participates in ATP binding; sequence GTNGKTT. UDP-N-acetyl-alpha-D-muramoyl-L-alanyl-D-glutamate-binding positions include Asn157, 158–159, Ser185, Gln191, and Arg193; that span reads TT. N6-carboxylysine is present on Lys225. Residues Arg390, 414–417, Gly465, and Glu469 each bind meso-2,6-diaminopimelate; that span reads DNPR. The Meso-diaminopimelate recognition motif motif lies at 414 to 417; it reads DNPR.

Belongs to the MurCDEF family. MurE subfamily. It depends on Mg(2+) as a cofactor. Carboxylation is probably crucial for Mg(2+) binding and, consequently, for the gamma-phosphate positioning of ATP.

It is found in the cytoplasm. It carries out the reaction UDP-N-acetyl-alpha-D-muramoyl-L-alanyl-D-glutamate + meso-2,6-diaminopimelate + ATP = UDP-N-acetyl-alpha-D-muramoyl-L-alanyl-gamma-D-glutamyl-meso-2,6-diaminopimelate + ADP + phosphate + H(+). It participates in cell wall biogenesis; peptidoglycan biosynthesis. Catalyzes the addition of meso-diaminopimelic acid to the nucleotide precursor UDP-N-acetylmuramoyl-L-alanyl-D-glutamate (UMAG) in the biosynthesis of bacterial cell-wall peptidoglycan. The sequence is that of UDP-N-acetylmuramoyl-L-alanyl-D-glutamate--2,6-diaminopimelate ligase from Shigella flexneri.